Consider the following 424-residue polypeptide: MFIDTAKIFVKSGKGGDGSISFRREKYIAFGGPDGGDGGKGGNVVLVVDPNMTTLLDFTYKRKYKAEPGGNGAGSKCFGKNGKDLHIKVPMGTIVKDVETDKIMADLSKPEDSYVVAKGGRGGKGNCRFTTPTRQAPDFAEPGMPEEERWIKLELKLLADVGLIGFPNVGKSTLLSVVSKARPKIANYHFTTLKPNLGVVSIEGVNNFVIADIPGIIEGASEGVGLGLDFLRHVERTRVLIHVIDISSVEGRDPYDDFLKINEELKRYSVKLYDRPQIIAANKSDMLFDEEKFEEFKTKVEKHGYNKVFKISAATKQGVDDLMKEAARLLSTIPVTDLEISEEDRFIEEEKRFTYSIRKEDNTYIVEGSFVDRLLNAVNVNDPDDLRYFHKVLKNKGVMEELMEMGIEDGDIVRLNDFEFDFLL.

The 158-residue stretch at 1-158 (MFIDTAKIFV…RWIKLELKLL (158 aa)) folds into the Obg domain. In terms of domain architecture, OBG-type G spans 159–331 (ADVGLIGFPN…LMKEAARLLS (173 aa)). GTP-binding positions include 165–172 (GFPNVGKS), 190–194 (FTTLK), 212–215 (DIPG), 282–285 (NKSD), and 312–314 (SAA). 2 residues coordinate Mg(2+): Ser-172 and Thr-192. In terms of domain architecture, OCT spans 345–424 (RFIEEEKRFT…LNDFEFDFLL (80 aa)).

It belongs to the TRAFAC class OBG-HflX-like GTPase superfamily. OBG GTPase family. As to quaternary structure, monomer. Requires Mg(2+) as cofactor.

It is found in the cytoplasm. Functionally, an essential GTPase which binds GTP, GDP and possibly (p)ppGpp with moderate affinity, with high nucleotide exchange rates and a fairly low GTP hydrolysis rate. Plays a role in control of the cell cycle, stress response, ribosome biogenesis and in those bacteria that undergo differentiation, in morphogenesis control. The sequence is that of GTPase Obg from Clostridium botulinum (strain Okra / Type B1).